The sequence spans 417 residues: Gamma-glutamyl phosphate reductase (417 aa).

This sequence belongs to the gamma-glutamyl phosphate reductase family.

The protein localises to the cytoplasm. It carries out the reaction L-glutamate 5-semialdehyde + phosphate + NADP(+) = L-glutamyl 5-phosphate + NADPH + H(+). Its pathway is amino-acid biosynthesis; L-proline biosynthesis; L-glutamate 5-semialdehyde from L-glutamate: step 2/2. In terms of biological role, catalyzes the NADPH-dependent reduction of L-glutamate 5-phosphate into L-glutamate 5-semialdehyde and phosphate. The product spontaneously undergoes cyclization to form 1-pyrroline-5-carboxylate. This Escherichia coli O7:K1 (strain IAI39 / ExPEC) protein is Gamma-glutamyl phosphate reductase.